The chain runs to 2046 residues: Protein TIC 214 (2046 aa).

The next 6 helical transmembrane spans lie at 18-38 (VSGPIILFGLYYGFIATLPFG), 54-74 (LYGIIAISGSITGQLIVFLSM), 79-99 (IYAALWKPHAITLLVIPYTFC), 125-145 (ILSLFMGGLILQLLNPILLAN), 163-183 (ISFMISSFCGWLGGHILFINL), and 214-234 (TFSVLLISYFSFYLGRSPLIF). Disordered stretches follow at residues 278 to 299 (DEDRSVAMAKKGRSVAEDEDRS), 320 to 472 (ARSV…VPRE), and 1833 to 1898 (AKDS…EDEI). Basic and acidic residues-rich tracts occupy residues 322–335 (SVAEDKDPEDEHRS), 344–368 (SVAEDKDPEDEHRSVAMAKKDRSVA), and 378–457 (AKKD…RSVA). Positions 1833–1866 (AKDSNANDINAKDSNANDINANDSNAKDSNANDI) are enriched in low complexity. A compositionally biased stretch (basic and acidic residues) spans 1882 to 1898 (NAKDSNADVPKKKEDEI).

The protein belongs to the TIC214 family. In terms of assembly, part of the Tic complex.

It is found in the plastid. It localises to the chloroplast inner membrane. Its function is as follows. Involved in protein precursor import into chloroplasts. May be part of an intermediate translocation complex acting as a protein-conducting channel at the inner envelope. This chain is Protein TIC 214, found in Pinus koraiensis (Korean pine).